The primary structure comprises 123 residues: Con-ikot-ikot (123 aa).

Residues 1–18 form the signal peptide; sequence MAMNMSMTLCMFVMVVVA. Residues 19-37 constitute a propeptide that is removed on maturation; it reads ATVIDSTQLQEPDLSRMRR. 5 cysteine pairs are disulfide-bonded: cysteine 49–cysteine 80, cysteine 50–cysteine 89, cysteine 57–cysteine 72, cysteine 90–cysteine 118, and cysteine 96–cysteine 113.

Homodimer; disulfide-linked. Expressed by the venom duct.

Its subcellular location is the secreted. In terms of biological role, potently and selectively blocks the desensitization of ionotropic glutamate AMPA receptors (GRIA1, GRIA2, GRIA3 and GRIA4). Binds to a different site than does the drug cyclothiazide. The toxin acts like a straitjacket on the 'gating ring' of the ligand-binding domain (LBD) of the receptor. It does so by restraining the domains via both intra- and interdimer cross-links such that agonist-induced closure of the LBD 'clamshells' is transduced into an irislike expansion of the gating ring. Compared to other desensitization blockers, it is a poor stabilizer of the open channel because toxin-bound AMPA receptors undergo frequent brief closures. In vitro, application of the toxin to hippocampal slices causes a large and rapid increase in resting AMPA receptor-mediated current leading to neuronal death. This Conus striatus (Striated cone) protein is Con-ikot-ikot.